The chain runs to 164 residues: MTCQTYNLFVLSVIMIYYGHTASSLNLVQLQDDIDKLKADFNSSHSDVADGGPIFIEKLKNWTGSNEKKIILSQIVSMYLEMFENTDQSKPHIKHISEELCTLRDSLSDGVKKVKDLMDLAKLQMTDLRIQRKAANELFIVLQKLVDPPSLKRKRNQPQRRCNC.

Residues 1–19 (MTCQTYNLFVLSVIMIYYG) form the signal peptide. N42 and N61 each carry an N-linked (GlcNAc...) asparagine glycan.

The protein belongs to the type II (or gamma) interferon family. In terms of assembly, homodimer.

It is found in the secreted. Functionally, produced by lymphocytes activated by specific antigens or mitogens. IFN-gamma, in addition to having antiviral activity, has important immunoregulatory functions. It is a potent activator of macrophages, it has antiproliferative effects on transformed cells and it can potentiate the antiviral and antitumor effects of the type I interferons. The protein is Interferon gamma (IFNG) of Numida meleagris (Helmeted guineafowl).